The chain runs to 138 residues: Large ribosomal subunit protein uL16 (138 aa).

Residues 1 to 17 are compositionally biased toward basic residues; that stretch reads MLIPRKVKHRKQHHPRQ. Positions 1 to 24 are disordered; it reads MLIPRKVKHRKQHHPRQRGIASGG.

The protein belongs to the universal ribosomal protein uL16 family. In terms of assembly, part of the 50S ribosomal subunit.

Functionally, binds 23S rRNA and is also seen to make contacts with the A and possibly P site tRNAs. This Mycobacterium ulcerans (strain Agy99) protein is Large ribosomal subunit protein uL16.